The chain runs to 255 residues: dTDP-3-amino-3,6-dideoxy-alpha-D-glucopyranose N,N-dimethyltransferase (255 aa).

S-adenosyl-L-methionine-binding positions include tyrosine 14, tyrosine 22, tyrosine 33, alanine 58, 58–59, glutamate 79, 101–102, and methionine 117; these read AC and DM.

This sequence belongs to the methyltransferase TylM1/DesVI family. In terms of assembly, homodimer.

The enzyme catalyses dTDP-3-amino-3,6-dideoxy-alpha-D-glucose + 2 S-adenosyl-L-methionine = dTDP-alpha-D-mycaminose + 2 S-adenosyl-L-homocysteine + 2 H(+). It functions in the pathway antibiotic biosynthesis; tylosin biosynthesis. Its function is as follows. S-adenosyl-L-methionine-dependent methyltransferase involved in the biosynthesis of mycaminose, an essential structural component of the macrolide antibiotic tylosin. Involved in the last step in mycaminose biosynthesis by mediating dimethylation of the hexose C-3' amino group. This chain is dTDP-3-amino-3,6-dideoxy-alpha-D-glucopyranose N,N-dimethyltransferase (tylM1), found in Streptomyces fradiae (Streptomyces roseoflavus).